The primary structure comprises 148 residues: Large ribosomal subunit protein uL15 (148 aa).

The segment covering 1–30 has biased composition (basic residues); that stretch reads MTHSKRNTRKLRGHVSHGHGRVGKHRKHPG. The disordered stretch occupies residues 1-38; the sequence is MTHSKRNTRKLRGHVSHGHGRVGKHRKHPGGRGMAGPE.

Belongs to the universal ribosomal protein uL15 family.

The sequence is that of Large ribosomal subunit protein uL15 (RPL27A) from Euplotes crassus.